The following is a 1149-amino-acid chain: Protein deacetylase HDAC6 (1149 aa).

The segment at 1-61 (MTSTGQDSST…KGKMKKLSQP (61 aa)) is disordered. Positions 18 to 29 (NPQSPLQESSAT) are enriched in polar residues. At serine 21 the chain carries Phosphoserine. An Omega-N-methylarginine modification is found at arginine 32. Serine 43 carries the post-translational modification Phosphoserine. The Nuclear export signal motif lies at 66–75 (LVVGLQGLDL). 2 histone deacetylase regions span residues 87–403 (LVFD…TLLG) and 481–799 (GLVY…SLLG). Histidine 215 acts as the 1 in catalysis. Residue histidine 610 is the 2 of the active site. Residues 954 to 975 (ALGETEPTPPASHTNKQTTGAS) form a disordered region. A phosphothreonine mark is found at threonine 958, threonine 961, threonine 967, and threonine 971. Over residues 964–975 (ASHTNKQTTGAS) the composition is skewed to polar residues. The residue at position 975 (serine 975) is a Phosphoserine. The segment at 1045-1143 (SWCPHLMAVC…NAAHQNKFGE (99 aa)) adopts a UBP-type zinc-finger fold. Positions 1047, 1049, 1067, 1070, 1079, 1082, and 1087 each coordinate Zn(2+). A ubiquitin binding region spans residues 1088-1090 (SRY). 5 residues coordinate Zn(2+): histidine 1094, histidine 1098, histidine 1104, cysteine 1117, and cysteine 1120. Residues 1116-1123 (WCYVCQAY) form a ubiquitin binding region. Phosphoserine is present on serine 1148.

The protein belongs to the histone deacetylase family. HD type 2 subfamily. As to quaternary structure, forms a trimeric complex in the nucleus consisting of BANP, HDAC6 and KHDRBS1/SAM68; HDAC6 keeps KHDRBS1 in a deacetylated state which inhibits the inclusion of CD44 alternate exons. The complex is disrupted by MAPK1/MAPK3-mediated phosphorylation of BANP which results in BANP export to the cytoplasm. This facilitates acetylation of KHDRBS1 and CD44 variant exon inclusion. Interacts with SIRT2 (via both phosphorylated, unphosphorylated, active or inactive forms); the interaction is necessary for the complex to interact with alpha-tubulin. Under proteasome impairment conditions, interacts with UBD via its histone deacetylase 1 and UBP-type zinc-finger regions. Interacts with BBIP1, CBFA2T3, CYLD, DDIT3/CHOP, ZMYND15, F-actin and HDAC11. Interacts with RIPOR2; this interaction occurs during early myogenic differentiation and prevents HDAC6 to deacetylate tubulin. Interacts with AURKA; AURKA-mediated phosphorylation of HDAC6 promotes deacetylation of alpha-tubulin. Interacts with DYSF; this interaction occurs during early myogenic differentiation. Interacts with TPPP; inhibiting the tubulin deacetylase activity of HDAC6. Interacts with DYNLL1. Interacts with ATP13A2; the interaction results in recruitment of HDAC6 to lysosomes to promote CTTN deacetylation. Interacts with CCDC141 (via the N-terminal region); inhibiting the deacetylase activity of HDAC6. Interacts with IPO7; the interaction facilitates HDAC6 nuclear translocation in dental papilla cells. Requires Zn(2+) as cofactor. In terms of processing, phosphorylated by AURKA; phosphorylation increases HDAC6-mediated deacetylation of alpha-tubulin and subsequent disassembly of cilia. Ubiquitinated. Its polyubiquitination however does not lead to its degradation. Post-translationally, sumoylated in vitro. Expressed in neurons of the cortex. Expressed in Purkinje cells. Detected in keratinocytes (at protein level).

The protein localises to the cytoplasm. Its subcellular location is the cytoskeleton. It localises to the nucleus. The protein resides in the perikaryon. It is found in the cell projection. The protein localises to the dendrite. Its subcellular location is the axon. It localises to the cilium. The protein resides in the microtubule organizing center. It is found in the centrosome. The protein localises to the cilium basal body. It catalyses the reaction N(6)-acetyl-L-lysyl-[protein] + H2O = L-lysyl-[protein] + acetate. It carries out the reaction N(6)-acetyl-L-lysyl-[alpha-tubulin] + H2O = L-lysyl-[alpha-tubulin] + acetate. It participates in protein modification; protein ubiquitination. Functionally, deacetylates a wide range of non-histone substrates. Plays a central role in microtubule-dependent cell motility by mediating deacetylation of tubulin. Required for cilia disassembly via deacetylation of alpha-tubulin. Alpha-tubulin deacetylation results in destabilization of dynamic microtubules. Promotes deacetylation of CTTN, leading to actin polymerization, promotion of autophagosome-lysosome fusion and completion of autophagy. Deacetylates SQSTM1. Deacetylates peroxiredoxins PRDX1 and PRDX2, decreasing their reducing activity. Deacetylates antiviral protein RIGI in the presence of viral mRNAs which is required for viral RNA detection by RIGI. Sequentially deacetylates and polyubiquitinates DNA mismatch repair protein MSH2 which leads to MSH2 degradation, reducing cellular sensitivity to DNA-damaging agents and decreasing cellular DNA mismatch repair activities. Deacetylates DNA mismatch repair protein MLH1 which prevents recruitment of the MutL alpha complex (formed by the MLH1-PMS2 heterodimer) to the MutS alpha complex (formed by the MSH2-MSH6 heterodimer), leading to tolerance of DNA damage. Deacetylates RHOT1/MIRO1 which blocks mitochondrial transport and mediates axon growth inhibition. Deacetylates transcription factor SP1 which leads to increased expression of ENG, positively regulating angiogenesis. Deacetylates KHDRBS1/SAM68 which regulates alternative splicing by inhibiting the inclusion of CD44 alternate exons. Promotes odontoblast differentiation following IPO7-mediated nuclear import and subsequent repression of RUNX2 expression. In addition to its protein deacetylase activity, plays a key role in the degradation of misfolded proteins: when misfolded proteins are too abundant to be degraded by the chaperone refolding system and the ubiquitin-proteasome, mediates the transport of misfolded proteins to a cytoplasmic juxtanuclear structure called aggresome. Probably acts as an adapter that recognizes polyubiquitinated misfolded proteins and target them to the aggresome, facilitating their clearance by autophagy. The protein is Protein deacetylase HDAC6 of Mus musculus (Mouse).